We begin with the raw amino-acid sequence, 522 residues long: DNA-binding protein Ikaros (522 aa).

Disordered regions lie at residues 1-48 (MEME…HNNR) and 96-115 (AKVN…YSSA). C2H2-type zinc fingers lie at residues 125 to 147 (LKCD…KRSH), 153 to 175 (FQCT…IKLH), 181 to 203 (FKCH…LRTH), and 209 to 232 (HKCA…ERCH). Residues 379-406 (KSASSEKDGSPSHSGQDSTDTESNNEEK) are disordered. 2 consecutive C2H2-type zinc fingers follow at residues 468-490 (YRCE…MGCH) and 496-520 (FECN…RGEH).

The protein belongs to the Ikaros C2H2-type zinc-finger protein family. In terms of tissue distribution, expression mainly limited to thymus, spleen and pronephros. Very low expression in liver. No expression in testis, brain, eye and muscle.

Its subcellular location is the nucleus. Binds and activates the enhancer (delta-A element) of the CD3-delta gene. Functions in the specification and the maturation of the T-lymphocyte. Also interacts with a critical control element in the TDT (terminal deoxynucleotidyltransferase) promoter as well as with the promoters for other genes expressed during early stages of B- and T-cell development. Function is isoform-specific and is modulated by dominant-negative inactive isoforms. This chain is DNA-binding protein Ikaros (ikzf1), found in Oncorhynchus mykiss (Rainbow trout).